A 349-amino-acid chain; its full sequence is uncharacterized protein (349 aa).

10 consecutive transmembrane segments (helical) span residues 15-35 (VHSPIYLALAVVIFSAANPVT), 53-73 (ISFCNVLFVGNLCALGLMILI), 91-111 (WFLLTVTAILSRAIAPGLMFS), 120-140 (NVVLIGRLEPVFTLILSILLL), 147-167 (LSMVATLISFVGVAVTVFWGV), 179-199 (FGLGESFVAIAAFISAITTIL), 218-238 (LLGTFVFFWIAVIIYGFDHFM), 248-268 (WMLIYGAIIVVVGQVAWLAGL), 276-296 (INLASLVTPILAIIFAYLILL), and 302-322 (AQYLGGILLLLGAILSFIDNL). 2 EamA domains span residues 39 to 164 (IELG…VTVF) and 191 to 319 (FISA…LSFI).

It belongs to the EamA transporter family.

It localises to the cell membrane. This is an uncharacterized protein from Synechocystis sp. (strain ATCC 27184 / PCC 6803 / Kazusa).